The following is a 278-amino-acid chain: GTPase Era (278 aa).

The 162-residue stretch at 7–168 (YCGYIAIVGK…ENLIYPYLPN (162 aa)) folds into the Era-type G domain. Positions 15-22 (GKPNVGKS) are G1. 15–22 (GKPNVGKS) contacts GTP. Positions 41-45 (NTTQK) are G2. Residues 62 to 65 (DTPG) form a G3 region. GTP is bound by residues 62–66 (DTPGI) and 117–120 (NKID). Residues 117–120 (NKID) are G4. The interval 147–149 (ISA) is G5. The region spanning 199–276 (LRDELPSIIT…YLIIWVKVKI (78 aa)) is the KH type-2 domain.

It belongs to the TRAFAC class TrmE-Era-EngA-EngB-Septin-like GTPase superfamily. Era GTPase family. In terms of assembly, monomer.

The protein resides in the cytoplasm. The protein localises to the cell membrane. An essential GTPase that binds both GDP and GTP, with rapid nucleotide exchange. Plays a role in 16S rRNA processing and 30S ribosomal subunit biogenesis and possibly also in cell cycle regulation and energy metabolism. The polypeptide is GTPase Era (Buchnera aphidicola subsp. Schizaphis graminum (strain Sg)).